Here is a 212-residue protein sequence, read N- to C-terminus: Pyridoxine/pyridoxamine 5'-phosphate oxidase (212 aa).

Substrate-binding positions include 8–11 (RREY) and lysine 66. Residues 61–66 (RIVLLK), 76–77 (FT), arginine 82, lysine 83, and glutamine 105 contribute to the FMN site. The substrate site is built by tyrosine 123, arginine 127, and serine 131. FMN is bound by residues 140-141 (QS) and tryptophan 185. 191–193 (RLH) provides a ligand contact to substrate. Residue arginine 195 coordinates FMN.

The protein belongs to the pyridoxamine 5'-phosphate oxidase family. As to quaternary structure, homodimer. The cofactor is FMN.

The enzyme catalyses pyridoxamine 5'-phosphate + O2 + H2O = pyridoxal 5'-phosphate + H2O2 + NH4(+). It carries out the reaction pyridoxine 5'-phosphate + O2 = pyridoxal 5'-phosphate + H2O2. It functions in the pathway cofactor metabolism; pyridoxal 5'-phosphate salvage; pyridoxal 5'-phosphate from pyridoxamine 5'-phosphate: step 1/1. The protein operates within cofactor metabolism; pyridoxal 5'-phosphate salvage; pyridoxal 5'-phosphate from pyridoxine 5'-phosphate: step 1/1. In terms of biological role, catalyzes the oxidation of either pyridoxine 5'-phosphate (PNP) or pyridoxamine 5'-phosphate (PMP) into pyridoxal 5'-phosphate (PLP). The polypeptide is Pyridoxine/pyridoxamine 5'-phosphate oxidase (Shewanella sp. (strain ANA-3)).